Reading from the N-terminus, the 335-residue chain is Galactosylgalactosylxylosylprotein 3-beta-glucuronosyltransferase 1 (335 aa).

Over 1–6 (MPKRRD) the chain is Cytoplasmic. Residues 3 to 5 (KRR) are essential for transport from endoplasmic reticulum to Golgi apparatus and interaction with SAR1A. Residues 7–27 (ILAIVLIVLPWTLLVTVWHQS) traverse the membrane as a helical; Signal-anchor for type II membrane protein segment. The Lumenal segment spans residues 28-335 (TIAPLLTTHK…KGFTDPTVEI (308 aa)). 92–94 (PTY) serves as a coordination point for UDP-alpha-D-glucuronate. 2 positions are modified to phosphothreonine: T104 and T109. Residue D123 coordinates UDP-alpha-D-glucuronate. Residue N141 is glycosylated (N-linked (GlcNAc...) asparagine). R166 and R171 together coordinate UDP-alpha-D-glucuronate. N-linked (GlcNAc...) asparagine glycosylation occurs at N185. 196–198 (DDD) lines the UDP-alpha-D-glucuronate pocket. D198 lines the Mn(2+) pocket. The interval 246 to 255 (FDPHRPFAID) is interaction with galactose moiety of substrate glycoprotein. The active-site Proton donor/acceptor is the E285. A glycan (N-linked (GlcNAc...) asparagine) is linked at N304. Residue 312 to 314 (HTR) coordinates UDP-alpha-D-glucuronate.

It belongs to the glycosyltransferase 43 family. In terms of assembly, homodimer. Interacts with SAR1A. Mn(2+) is required as a cofactor. In terms of processing, the soluble form derives from the membrane form by proteolytic processing.

The protein resides in the golgi apparatus membrane. It is found in the secreted. The catalysed reaction is 3-O-(beta-D-galactosyl-(1-&gt;3)-beta-D-galactosyl-(1-&gt;4)-beta-D-xylosyl)-L-seryl-[protein] + UDP-alpha-D-glucuronate = 3-O-(beta-D-GlcA-(1-&gt;3)-beta-D-Gal-(1-&gt;3)-beta-D-Gal-(1-&gt;4)-beta-D-Xyl)-L-seryl-[protein] + UDP + H(+). Its pathway is protein modification; protein glycosylation. Functionally, involved in the biosynthesis of L2/HNK-1 carbohydrate epitope on glycoproteins. Can also play a role in glycosaminoglycan biosynthesis. Substrates include asialo-orosomucoid (ASOR), asialo-fetuin, and asialo-neural cell adhesion molecule. Requires sphingomyelin for activity: stearoyl-sphingomyelin was the most effective, followed by palmitoyl-sphingomyelin and lignoceroyl-sphingomyelin. Activity was demonstrated only for sphingomyelin with a saturated fatty acid and not for that with an unsaturated fatty acid, regardless of the length of the acyl group. This chain is Galactosylgalactosylxylosylprotein 3-beta-glucuronosyltransferase 1, found in Canis lupus familiaris (Dog).